The sequence spans 415 residues: Polyadenylate-binding protein RBP45C (415 aa).

The disordered stretch occupies residues 1–77 (MMQQPPPASN…GGSQNPGSAG (77 aa)). Low complexity predominate over residues 23-64 (QQAYLQQQQSWMMQHQQQQQGQPPAGWNQQSAPSSGQPQQQQ). 3 RRM domains span residues 80–160 (RSLW…WAQL), 173–252 (HTVF…PAAN), and 278–350 (TTIF…WGRS). Residues 344–356 (RLSWGRSPSNKQT) show a composition bias toward polar residues. Residues 344–369 (RLSWGRSPSNKQTQPDQAQYGGGGGY) form a disordered region.

It belongs to the polyadenylate-binding RBP45 family. In terms of assembly, interacts with the poly(A) tail of mRNA in nucleus. In terms of tissue distribution, mostly expressed in seedlings and stems, and, to a lower extent, in leaves and flowers.

The protein resides in the nucleus. Its function is as follows. Heterogeneous nuclear ribonucleoprotein (hnRNP)-protein binding the poly(A) tail of mRNA and probably involved in some steps of pre-mRNA maturation. The polypeptide is Polyadenylate-binding protein RBP45C (RBP45C) (Arabidopsis thaliana (Mouse-ear cress)).